The sequence spans 411 residues: Ubiquitin-binding protein CUE5 (411 aa).

The segment covering 1 to 12 (MEEKEGIKDSSL) has biased composition (basic and acidic residues). 2 disordered regions span residues 1–102 (MEEK…NPIL) and 142–411 (ESGK…DDEM). K15 is covalently cross-linked (Glycyl lysine isopeptide (Lys-Gly) (interchain with G-Cter in ubiquitin)). 2 positions are modified to phosphoserine: S21 and S36. A compositionally biased stretch (basic and acidic residues) spans 25–58 (DISKTTDVDLNSDGKKDNDTSAKDGTPKVEEKVN). K59 is covalently cross-linked (Glycyl lysine isopeptide (Lys-Gly) (interchain with G-Cter in ubiquitin)). The residue at position 70 (T70) is a Phosphothreonine. Residue K76 forms a Glycyl lysine isopeptide (Lys-Gly) (interchain with G-Cter in ubiquitin) linkage. A Phosphoserine modification is found at S91. The region spanning 97 to 140 (KENPILQELKDAFPNLEEKYIKAVIIASQGVLSPAFNALLFLSD) is the CUE domain. A Glycyl lysine isopeptide (Lys-Gly) (interchain with G-Cter in ubiquitin) cross-link involves residue K156. T167 is subject to Phosphothreonine. Residues 209 to 219 (NPNEREQHHED) show a composition bias toward basic and acidic residues. At S220 the chain carries Phosphoserine. Residues 230–242 (VEKDLPELTDRAG) show a composition bias toward basic and acidic residues. Positions 245–256 (LQDTANKVSNWI) are enriched in polar residues. Residues S309 and S318 each carry the phosphoserine modification. Phosphothreonine is present on T346. S348 bears the Phosphoserine mark. Phosphothreonine is present on T352. Residue K354 forms a Glycyl lysine isopeptide (Lys-Gly) (interchain with G-Cter in ubiquitin) linkage. T364 and T367 each carry phosphothreonine. Positions 373–376 (WQPL) match the AIM motif. K396 participates in a covalent cross-link: Glycyl lysine isopeptide (Lys-Gly) (interchain with G-Cter in ubiquitin). The segment covering 399–411 (DEDEFLINSDDEM) has biased composition (acidic residues). Position 407 is a phosphoserine (S407).

In terms of assembly, interacts with ATG8 (via AIM motif), CLB2, and ubiquitin (via CUE domain).

The protein resides in the cytoplasm. In terms of biological role, connects the ubiquitin pathway to autophagy by functioning as a ubiquitin-ATG8 adapter and thus mediating autophagic clearance of ubiquitin conjugates under starvation conditions. The CUE5-dependent selective autophagy pathway plays an important role in clearance of cytotoxic protein aggregates. Not required for cytoplasmic to vacuole pathway (cvt), mitophagy, pexophagy, or ribophagy. The polypeptide is Ubiquitin-binding protein CUE5 (Saccharomyces cerevisiae (strain ATCC 204508 / S288c) (Baker's yeast)).